A 231-amino-acid polypeptide reads, in one-letter code: tRNA (guanine-N(1)-)-methyltransferase (231 aa).

S-adenosyl-L-methionine is bound by residues Gly112 and 132–137; that span reads IGDYIL.

The protein belongs to the RNA methyltransferase TrmD family. Homodimer.

The protein localises to the cytoplasm. It catalyses the reaction guanosine(37) in tRNA + S-adenosyl-L-methionine = N(1)-methylguanosine(37) in tRNA + S-adenosyl-L-homocysteine + H(+). Its function is as follows. Specifically methylates guanosine-37 in various tRNAs. This chain is tRNA (guanine-N(1)-)-methyltransferase, found in Sulfurimonas denitrificans (strain ATCC 33889 / DSM 1251) (Thiomicrospira denitrificans (strain ATCC 33889 / DSM 1251)).